A 156-amino-acid polypeptide reads, in one-letter code: Transcription elongation factor GreA (156 aa).

Positions 8-75 (LTKEGYEKLK…ELENMLSKAE (68 aa)) form a coiled coil.

Belongs to the GreA/GreB family.

Its function is as follows. Necessary for efficient RNA polymerase transcription elongation past template-encoded arresting sites. The arresting sites in DNA have the property of trapping a certain fraction of elongating RNA polymerases that pass through, resulting in locked ternary complexes. Cleavage of the nascent transcript by cleavage factors such as GreA or GreB allows the resumption of elongation from the new 3'terminus. GreA releases sequences of 2 to 3 nucleotides. The protein is Transcription elongation factor GreA of Thermosipho melanesiensis (strain DSM 12029 / CIP 104789 / BI429).